A 213-amino-acid polypeptide reads, in one-letter code: uncharacterized protein (213 aa).

This is an uncharacterized protein from Saccharomyces cerevisiae (strain ATCC 204508 / S288c) (Baker's yeast).